Reading from the N-terminus, the 289-residue chain is ATP synthase gamma chain (289 aa).

It belongs to the ATPase gamma chain family. F-type ATPases have 2 components, CF(1) - the catalytic core - and CF(0) - the membrane proton channel. CF(1) has five subunits: alpha(3), beta(3), gamma(1), delta(1), epsilon(1). CF(0) has three main subunits: a, b and c.

It localises to the cell inner membrane. Functionally, produces ATP from ADP in the presence of a proton gradient across the membrane. The gamma chain is believed to be important in regulating ATPase activity and the flow of protons through the CF(0) complex. The sequence is that of ATP synthase gamma chain from Coxiella burnetii (strain Dugway 5J108-111).